We begin with the raw amino-acid sequence, 450 residues long: Phosphoglucosamine mutase (450 aa).

The Phosphoserine intermediate role is filled by Ser104. Ser104, Asp245, Asp247, and Asp249 together coordinate Mg(2+). Residue Ser104 is modified to Phosphoserine.

The protein belongs to the phosphohexose mutase family. Requires Mg(2+) as cofactor. Activated by phosphorylation.

The catalysed reaction is alpha-D-glucosamine 1-phosphate = D-glucosamine 6-phosphate. Functionally, catalyzes the conversion of glucosamine-6-phosphate to glucosamine-1-phosphate. The chain is Phosphoglucosamine mutase from Phenylobacterium zucineum (strain HLK1).